The primary structure comprises 1324 residues: Myotubularin-related protein DDB_G0290005 (1324 aa).

Positions 140-276 (KYHDNTTPNN…TSSTNGNCST (137 aa)) are disordered. Low complexity predominate over residues 144–180 (NTTPNNNNNNNNNNNNNNNNTNNNNNNNINKSNNSST). Positions 181–194 (DQLNSFSLEKQPSQ) are enriched in polar residues. Residues 195–222 (NENLNNNNNNNNNNNNGNNNINNNNLMN) show a composition bias toward low complexity. Residues 223 to 247 (SLTQPSTSSRSRLLKSNSTPINLNE) are compositionally biased toward polar residues. Residues 248 to 276 (SSTSTNSPTLSSTTTTTTTTSSTNGNCST) show a composition bias toward low complexity. Residues 349–807 (GWLFYDPIEE…KGVQLWSDYF (459 aa)) enclose the Myotubularin phosphatase domain. Substrate-binding positions include 514–515 (NI), 575–581 (CIDGWDR), and Arg-621. The active-site Phosphocysteine intermediate is the Cys-575. Disordered regions lie at residues 624–664 (QSIS…TTTS), 841–1043 (QKKK…QQQE), 1066–1110 (EQQE…QQQT), 1144–1213 (RKQE…LTMP), and 1232–1296 (LHPN…DNTS). 2 stretches are compositionally biased toward low complexity: residues 625–664 (SISS…TTTS) and 852–864 (GASG…SGSS). Residues 865 to 882 (SKHHHHHHHHHHHHHHRK) are compositionally biased toward basic residues. Residues 883–894 (STDEKDSKEKSS) are compositionally biased toward basic and acidic residues. Composition is skewed to low complexity over residues 899-914 (SRTS…STSS) and 927-973 (TITT…TTTP). Over residues 988-1002 (DKLKSPSGDDIKQEQ) the composition is skewed to basic and acidic residues. The span at 1005-1024 (MNQFTSQHPNNQMESSSEIN) shows a compositional bias: polar residues. The stretch at 1020-1195 (SSEINQQNEQ…LEQQKPKADI (176 aa)) forms a coiled coil. Residues 1025–1043 (QQNEQSQLEQQQEQQQQQE) show a composition bias toward low complexity. The segment covering 1079-1090 (PNETITYSMESD) has biased composition (polar residues). A compositionally biased stretch (low complexity) spans 1091–1109 (SQSSISQNQNQLQQQQQQQ). Residues 1144–1193 (RKQEKEKRKLEKEKKQKERAERKLEKEKKRDQKEREQKEKELLEQQKPKA) are compositionally biased toward basic and acidic residues. Positions 1234–1243 (PNLSDQNSQT) are enriched in polar residues. Low complexity-rich tracts occupy residues 1244-1258 (NSSG…NSPN) and 1265-1294 (SNLS…NNDN).

This sequence belongs to the protein-tyrosine phosphatase family. Non-receptor class myotubularin subfamily.

Its subcellular location is the cytoplasm. Its function is as follows. Phosphatase that acts on lipids with a phosphoinositol headgroup. This chain is Myotubularin-related protein DDB_G0290005, found in Dictyostelium discoideum (Social amoeba).